The chain runs to 434 residues: Histidinol dehydrogenase (434 aa).

Residues Tyr-130, Gln-191, and Asn-214 each contribute to the NAD(+) site. Ser-237, Gln-259, and His-262 together coordinate substrate. Positions 259 and 262 each coordinate Zn(2+). Catalysis depends on proton acceptor residues Glu-327 and His-328. Residues His-328, Asp-361, Glu-415, and His-420 each contribute to the substrate site. Position 361 (Asp-361) interacts with Zn(2+). Position 420 (His-420) interacts with Zn(2+).

This sequence belongs to the histidinol dehydrogenase family. The cofactor is Zn(2+).

The catalysed reaction is L-histidinol + 2 NAD(+) + H2O = L-histidine + 2 NADH + 3 H(+). Its pathway is amino-acid biosynthesis; L-histidine biosynthesis; L-histidine from 5-phospho-alpha-D-ribose 1-diphosphate: step 9/9. Functionally, catalyzes the sequential NAD-dependent oxidations of L-histidinol to L-histidinaldehyde and then to L-histidine. This Cereibacter sphaeroides (strain ATCC 17023 / DSM 158 / JCM 6121 / CCUG 31486 / LMG 2827 / NBRC 12203 / NCIMB 8253 / ATH 2.4.1.) (Rhodobacter sphaeroides) protein is Histidinol dehydrogenase.